Reading from the N-terminus, the 370-residue chain is 4-hydroxy-3-methylbut-2-en-1-yl diphosphate synthase (flavodoxin) (370 aa).

The [4Fe-4S] cluster site is built by Cys-265, Cys-268, Cys-300, and Glu-307.

The protein belongs to the IspG family. Requires [4Fe-4S] cluster as cofactor.

It carries out the reaction (2E)-4-hydroxy-3-methylbut-2-enyl diphosphate + oxidized [flavodoxin] + H2O + 2 H(+) = 2-C-methyl-D-erythritol 2,4-cyclic diphosphate + reduced [flavodoxin]. It participates in isoprenoid biosynthesis; isopentenyl diphosphate biosynthesis via DXP pathway; isopentenyl diphosphate from 1-deoxy-D-xylulose 5-phosphate: step 5/6. Functionally, converts 2C-methyl-D-erythritol 2,4-cyclodiphosphate (ME-2,4cPP) into 1-hydroxy-2-methyl-2-(E)-butenyl 4-diphosphate. The polypeptide is 4-hydroxy-3-methylbut-2-en-1-yl diphosphate synthase (flavodoxin) (Symbiobacterium thermophilum (strain DSM 24528 / JCM 14929 / IAM 14863 / T)).